We begin with the raw amino-acid sequence, 198 residues long: Nucleoid occlusion factor SlmA (198 aa).

The HTH tetR-type domain occupies 10–70 (NRREEILQSL…SLIEFIEDSL (61 aa)). A DNA-binding region (H-T-H motif) is located at residues 33 to 52 (TTAKLAASVGVSEAALYRHF). Residues 117 to 144 (EQDRLQGRINQLFERIEAQLRQVLREKR) are a coiled coil.

It belongs to the nucleoid occlusion factor SlmA family. As to quaternary structure, homodimer. Interacts with FtsZ.

The protein localises to the cytoplasm. The protein resides in the nucleoid. Required for nucleoid occlusion (NO) phenomenon, which prevents Z-ring formation and cell division over the nucleoid. Acts as a DNA-associated cell division inhibitor that binds simultaneously chromosomal DNA and FtsZ, and disrupts the assembly of FtsZ polymers. SlmA-DNA-binding sequences (SBS) are dispersed on non-Ter regions of the chromosome, preventing FtsZ polymerization at these regions. The chain is Nucleoid occlusion factor SlmA from Escherichia coli (strain 55989 / EAEC).